The primary structure comprises 163 residues: Nucleotide-binding protein RER_17110 (163 aa).

The protein belongs to the YajQ family.

Nucleotide-binding protein. In Rhodococcus erythropolis (strain PR4 / NBRC 100887), this protein is Nucleotide-binding protein RER_17110.